Here is a 306-residue protein sequence, read N- to C-terminus: Putative dihydroorotate dehydrogenase A (fumarate) (306 aa).

FMN is bound by residues serine 24 and 48 to 49; that span reads KS. Residues lysine 48, 72–76, and asparagine 129 contribute to the substrate site; that span reads NAVGL. Asparagine 129 contributes to the FMN binding site. Cysteine 132 acts as the Nucleophile in catalysis. FMN-binding residues include lysine 167 and isoleucine 192. Residue 193-194 participates in substrate binding; it reads NS. FMN is bound by residues glycine 218 and 244-245; that span reads GG.

This sequence belongs to the dihydroorotate dehydrogenase family. Type 1 subfamily. In terms of assembly, homodimer. It depends on FMN as a cofactor.

It is found in the cytoplasm. It carries out the reaction (S)-dihydroorotate + fumarate = orotate + succinate. Its pathway is pyrimidine metabolism; UMP biosynthesis via de novo pathway. Catalyzes the conversion of dihydroorotate to orotate with fumarate as the electron acceptor. The sequence is that of Putative dihydroorotate dehydrogenase A (fumarate) (pyrD) from Aeropyrum pernix (strain ATCC 700893 / DSM 11879 / JCM 9820 / NBRC 100138 / K1).